The chain runs to 100 residues: Putative membrane protein insertion efficiency factor (100 aa).

A disordered region spans residues 73-100; the sequence is DPVPDLPGSAPEENGRPSPDGQHSGSGG.

It belongs to the UPF0161 family.

It localises to the cell inner membrane. In terms of biological role, could be involved in insertion of integral membrane proteins into the membrane. This Synechococcus sp. (strain JA-3-3Ab) (Cyanobacteria bacterium Yellowstone A-Prime) protein is Putative membrane protein insertion efficiency factor.